The chain runs to 60 residues: Cytotoxin 10 (60 aa).

4 disulfide bridges follow: C3/C21, C14/C38, C42/C53, and C54/C59.

This sequence belongs to the three-finger toxin family. Short-chain subfamily. Type IA cytotoxin sub-subfamily. As to quaternary structure, monomer in solution; Homodimer and oligomer in the presence of negatively charged lipids forming a pore with a size ranging between 20 and 30 Angstroms. In terms of tissue distribution, expressed by the venom gland.

It localises to the secreted. The protein localises to the target cell membrane. Functionally, shows cytolytic activity on many different cells by forming pore in lipid membranes. In vivo, increases heart rate or kills the animal by cardiac arrest. In addition, it binds to heparin with high affinity, interacts with Kv channel-interacting protein 1 (KCNIP1) in a calcium-independent manner, and binds to integrin alpha-V/beta-3 (ITGAV/ITGB3) with moderate affinity. Has hemolytic activity towards human erythrocytes (EC(50)=0.162 uM) and cytolytic activity towards various cell lines. The chain is Cytotoxin 10 from Naja naja (Indian cobra).